A 65-amino-acid polypeptide reads, in one-letter code: Large ribosomal subunit protein bL35 (65 aa).

A disordered region spans residues 1-65; sequence MQKIKTNRSA…KELKRLLPGM (65 aa). Basic residues-rich tracts occupy residues 10-19 and 33-47; these read AAKRFKRTKS and LTKK…LRKS. Over residues 54–65 the composition is skewed to basic and acidic residues; the sequence is NNKELKRLLPGM.

This sequence belongs to the bacterial ribosomal protein bL35 family.

The protein is Large ribosomal subunit protein bL35 of Desulfosudis oleivorans (strain DSM 6200 / JCM 39069 / Hxd3) (Desulfococcus oleovorans).